We begin with the raw amino-acid sequence, 380 residues long: Cytochrome b (380 aa).

4 helical membrane passes run 34 to 54, 78 to 99, 114 to 134, and 179 to 199; these read FGSL…LLAA, WLIR…YLHI, WNTG…GYVL, and FFTL…IHLT. Residues His-84 and His-98 each contribute to the heme b site. Residues His-183 and His-197 each coordinate heme b. Residue His-202 participates in a ubiquinone binding. 4 helical membrane-spanning segments follow: residues 227-247, 289-309, 321-341, and 348-368; these read LKDI…ALFS, LGGV…PLLH, LSQL…WVGS, and FMII…VLFP.

This sequence belongs to the cytochrome b family. As to quaternary structure, the cytochrome bc1 complex contains 11 subunits: 3 respiratory subunits (MT-CYB, CYC1 and UQCRFS1), 2 core proteins (UQCRC1 and UQCRC2) and 6 low-molecular weight proteins (UQCRH/QCR6, UQCRB/QCR7, UQCRQ/QCR8, UQCR10/QCR9, UQCR11/QCR10 and a cleavage product of UQCRFS1). This cytochrome bc1 complex then forms a dimer. Heme b is required as a cofactor.

The protein localises to the mitochondrion inner membrane. Functionally, component of the ubiquinol-cytochrome c reductase complex (complex III or cytochrome b-c1 complex) that is part of the mitochondrial respiratory chain. The b-c1 complex mediates electron transfer from ubiquinol to cytochrome c. Contributes to the generation of a proton gradient across the mitochondrial membrane that is then used for ATP synthesis. This is Cytochrome b (MT-CYB) from Anthropoides virgo (Demoiselle crane).